A 291-amino-acid polypeptide reads, in one-letter code: ADP-dependent (S)-NAD(P)H-hydrate dehydratase (291 aa).

In terms of domain architecture, YjeF C-terminal spans 5–273 (SKDILEEVIT…QALPTYMKKY (269 aa)). The (6S)-NADPHX site is built by Ala-40, Gly-103, and His-153. Gly-215 is an AMP binding site. Asp-216 lines the (6S)-NADPHX pocket.

It belongs to the NnrD/CARKD family. In terms of assembly, homotetramer. The cofactor is Mg(2+).

It catalyses the reaction (6S)-NADHX + ADP = AMP + phosphate + NADH + H(+). The catalysed reaction is (6S)-NADPHX + ADP = AMP + phosphate + NADPH + H(+). Functionally, catalyzes the dehydration of the S-form of NAD(P)HX at the expense of ADP, which is converted to AMP. Together with NAD(P)HX epimerase, which catalyzes the epimerization of the S- and R-forms, the enzyme allows the repair of both epimers of NAD(P)HX, a damaged form of NAD(P)H that is a result of enzymatic or heat-dependent hydration. The chain is ADP-dependent (S)-NAD(P)H-hydrate dehydratase from Enterococcus faecalis (strain ATCC 700802 / V583).